The primary structure comprises 41 residues: MKIVKLITIFAMIATLMVTVTNGEAVFLTPDQIKAMIKRHG.

The signal sequence occupies residues 1–25; the sequence is MKIVKLITIFAMIATLMVTVTNGEA. Position 40 is a histidine amide (His-40).

As to expression, expressed by the venom gland.

The protein localises to the secreted. Functionally, venom protein with unknown function. Does not induce paralysis when a high dose is administered by intrathoracic injection into the blowfly Lucilia caesar. The sequence is that of U15-myrmicitoxin-Tb1b from Tetramorium bicarinatum (Tramp ant).